The primary structure comprises 223 residues: Small ribosomal subunit protein uS3 (223 aa).

The KH type-2 domain maps to 39–115 (IRKYIEKNLA…RVFINIVEIK (77 aa)).

This sequence belongs to the universal ribosomal protein uS3 family. As to quaternary structure, part of the 30S ribosomal subunit. Forms a tight complex with proteins S10 and S14.

Functionally, binds the lower part of the 30S subunit head. Binds mRNA in the 70S ribosome, positioning it for translation. In Leuconostoc mesenteroides subsp. mesenteroides (strain ATCC 8293 / DSM 20343 / BCRC 11652 / CCM 1803 / JCM 6124 / NCDO 523 / NBRC 100496 / NCIMB 8023 / NCTC 12954 / NRRL B-1118 / 37Y), this protein is Small ribosomal subunit protein uS3.